We begin with the raw amino-acid sequence, 437 residues long: Protein translocase subunit SecY (437 aa).

Helical transmembrane passes span 19–39, 69–89, 122–142, 157–177, 189–209, 219–239, 276–296, 316–336, 378–398, and 400–420; these read LFTL…IPGV, LLQI…SIIL, VALA…APLF, IFTT…VMWL, GMSI…LWAI, WIEF…VVFV, VIPV…AQFA, PIYI…YVAI, GSLY…GFGA, and QNFP…LETV.

The protein belongs to the SecY/SEC61-alpha family. Component of the Sec protein translocase complex. Heterotrimer consisting of SecY, SecE and SecG subunits. The heterotrimers can form oligomers, although 1 heterotrimer is thought to be able to translocate proteins. Interacts with the ribosome. Interacts with SecDF, and other proteins may be involved. Interacts with SecA.

It localises to the cell membrane. The central subunit of the protein translocation channel SecYEG. Consists of two halves formed by TMs 1-5 and 6-10. These two domains form a lateral gate at the front which open onto the bilayer between TMs 2 and 7, and are clamped together by SecE at the back. The channel is closed by both a pore ring composed of hydrophobic SecY resides and a short helix (helix 2A) on the extracellular side of the membrane which forms a plug. The plug probably moves laterally to allow the channel to open. The ring and the pore may move independently. In Streptomyces galbus, this protein is Protein translocase subunit SecY.